A 166-amino-acid polypeptide reads, in one-letter code: Ureidoglycolate lyase (166 aa).

It belongs to the ureidoglycolate lyase family. As to quaternary structure, homodimer. Ni(2+) serves as cofactor.

The catalysed reaction is (S)-ureidoglycolate = urea + glyoxylate. Its pathway is nitrogen metabolism; (S)-allantoin degradation. Its function is as follows. Catalyzes the catabolism of the allantoin degradation intermediate (S)-ureidoglycolate, generating urea and glyoxylate. Involved in the utilization of allantoin as nitrogen source. The polypeptide is Ureidoglycolate lyase (Rhizobium leguminosarum bv. trifolii (strain WSM2304)).